The following is a 401-amino-acid chain: Chromate transport protein (401 aa).

12 helical membrane passes run 26–46 (LVMYFLRLGTLGFGGPVALAG), 67–87 (GLALAQLAPGPLAAQLAIYLG), 93–113 (IVGATLVGVAFVLPSFLMVLA), 124–144 (LTWMQSVFYGVGAAVIGIIAI), 172–192 (VITESEVAWLFLAAGVLVWFW), 214–234 (AASGMMSTLDWPLLSQIGVFF), 237–257 (AGAFVFGSGLAIVPFLYGGVV), 272–294 (VAVAMITPGPVVITVGFIGYLVA), 299–321 (ACVAAAATFLPCYLFTVLPAPYF), 330–350 (ILAFVDGVTAAAIGAITGAVI), 356–376 (SIVDIPTALLALVTVALLLKF), and 379–399 (LSEPMIVAGAALIGLVAYPLL).

Belongs to the chromate ion transporter (CHR) (TC 2.A.51) family.

It is found in the cell inner membrane. In terms of biological role, this protein reduces chromate accumulation and is essential for chromate resistance. This chain is Chromate transport protein, found in Cupriavidus metallidurans (strain ATCC 43123 / DSM 2839 / NBRC 102507 / CH34) (Ralstonia metallidurans).